Reading from the N-terminus, the 324-residue chain is Lipoyl synthase, chloroplastic (324 aa).

Composition is skewed to low complexity over residues 1 to 12 (MCGPTATTVANA) and 20 to 29 (KGLPPGLKKP). Residues 1–30 (MCGPTATTVANAGTGGETIKGLPPGLKKPP) are disordered. Residues Cys58, Cys63, Cys69, Cys86, Cys90, Cys93, and Ser302 each coordinate [4Fe-4S] cluster. The Radical SAM core domain occupies 72–291 (GDTGTATVML…AYGEEVIGFR (220 aa)).

Belongs to the radical SAM superfamily. Lipoyl synthase family. [4Fe-4S] cluster is required as a cofactor.

The protein resides in the plastid. The protein localises to the chloroplast. It carries out the reaction [[Fe-S] cluster scaffold protein carrying a second [4Fe-4S](2+) cluster] + N(6)-octanoyl-L-lysyl-[protein] + 2 oxidized [2Fe-2S]-[ferredoxin] + 2 S-adenosyl-L-methionine + 4 H(+) = [[Fe-S] cluster scaffold protein] + N(6)-[(R)-dihydrolipoyl]-L-lysyl-[protein] + 4 Fe(3+) + 2 hydrogen sulfide + 2 5'-deoxyadenosine + 2 L-methionine + 2 reduced [2Fe-2S]-[ferredoxin]. It participates in protein modification; protein lipoylation via endogenous pathway; protein N(6)-(lipoyl)lysine from octanoyl-[acyl-carrier-protein]: step 2/2. Catalyzes the radical-mediated insertion of two sulfur atoms into the C-6 and C-8 positions of the octanoyl moiety bound to the lipoyl domains of lipoate-dependent enzymes, thereby converting the octanoylated domains into lipoylated derivatives. The polypeptide is Lipoyl synthase, chloroplastic (Ostreococcus lucimarinus (strain CCE9901)).